The chain runs to 215 residues: Leucyl/phenylalanyl-tRNA--protein transferase (215 aa).

The protein belongs to the L/F-transferase family.

It is found in the cytoplasm. The catalysed reaction is N-terminal L-lysyl-[protein] + L-leucyl-tRNA(Leu) = N-terminal L-leucyl-L-lysyl-[protein] + tRNA(Leu) + H(+). The enzyme catalyses N-terminal L-arginyl-[protein] + L-leucyl-tRNA(Leu) = N-terminal L-leucyl-L-arginyl-[protein] + tRNA(Leu) + H(+). It catalyses the reaction L-phenylalanyl-tRNA(Phe) + an N-terminal L-alpha-aminoacyl-[protein] = an N-terminal L-phenylalanyl-L-alpha-aminoacyl-[protein] + tRNA(Phe). Functions in the N-end rule pathway of protein degradation where it conjugates Leu, Phe and, less efficiently, Met from aminoacyl-tRNAs to the N-termini of proteins containing an N-terminal arginine or lysine. The chain is Leucyl/phenylalanyl-tRNA--protein transferase from Campylobacter jejuni subsp. doylei (strain ATCC BAA-1458 / RM4099 / 269.97).